We begin with the raw amino-acid sequence, 216 residues long: Uracil phosphoribosyltransferase (216 aa).

GTP-binding positions include Arg30, Arg39, 73–76, and Lys75; that span reads ASKI. Residue Arg83 coordinates 5-phospho-alpha-D-ribose 1-diphosphate. Residue Lys100 participates in GTP binding. Arg108 is a 5-phospho-alpha-D-ribose 1-diphosphate binding site. Residue Arg129 participates in GTP binding. Residues Asp135 and 135–143 contribute to the 5-phospho-alpha-D-ribose 1-diphosphate site; that span reads DPMLATGGT. Tyr199 contributes to the D-ribose 5-phosphate binding site. Uracil contacts are provided by residues Ile200 and 205-207; that span reads GDF. 5-phospho-alpha-D-ribose 1-diphosphate is bound at residue Asp206.

Belongs to the UPRTase family. The cofactor is Mg(2+).

The enzyme catalyses UMP + diphosphate = 5-phospho-alpha-D-ribose 1-diphosphate + uracil. Its pathway is pyrimidine metabolism; UMP biosynthesis via salvage pathway; UMP from uracil: step 1/1. Allosterically activated by GTP. Functionally, catalyzes the conversion of uracil and 5-phospho-alpha-D-ribose 1-diphosphate (PRPP) to UMP and diphosphate. The protein is Uracil phosphoribosyltransferase (uprt) of Dictyostelium discoideum (Social amoeba).